The sequence spans 238 residues: MAGHSKWANTKHRKERADHKKGKIFSRTIKELISAVKMGGPDPKSNARLRMIIQKAKDQNIPNENIERNLKKASSADQKNYEEVTYELYGFGGVGIIVEAMTDNKNRTASDMRVAVNKRGGALVEPGSVLYNFSRKGACYVPKSSIDEASLLTHVIDCGGEDLDSEDEEFFLVLCEPTDLASVKEALLAKGVTCSEEKMIYVPLRLVDCDEEAGKSNLALIEWLENIDDVDDVYHNMT.

The tract at residues 1 to 21 is disordered; that stretch reads MAGHSKWANTKHRKERADHKK. The span at 9-21 shows a compositional bias: basic residues; the sequence is NTKHRKERADHKK.

The protein belongs to the TACO1 family.

It localises to the cytoplasm. In Chlamydia muridarum (strain MoPn / Nigg), this protein is Probable transcriptional regulatory protein TC_0742.